Here is a 239-residue protein sequence, read N- to C-terminus: Uridylate kinase (239 aa).

10-13 contacts ATP; that stretch reads KLSG. The tract at residues 18–23 is involved in allosteric activation by GTP; that stretch reads GEQGYG. Gly52 contacts UMP. The ATP site is built by Gly53 and Arg57. UMP-binding positions include Asp72 and 133 to 140; that span reads TGNPYFST. Asn161, Tyr167, and Glu170 together coordinate ATP.

Belongs to the UMP kinase family. As to quaternary structure, homohexamer.

Its subcellular location is the cytoplasm. It carries out the reaction UMP + ATP = UDP + ADP. It participates in pyrimidine metabolism; CTP biosynthesis via de novo pathway; UDP from UMP (UMPK route): step 1/1. Its activity is regulated as follows. Allosterically activated by GTP. Inhibited by UTP. In terms of biological role, catalyzes the reversible phosphorylation of UMP to UDP. The chain is Uridylate kinase from Halalkalibacterium halodurans (strain ATCC BAA-125 / DSM 18197 / FERM 7344 / JCM 9153 / C-125) (Bacillus halodurans).